The chain runs to 415 residues: MAIKKRSATVVPGASGAAAAVKNPQASKTSFWGELPQHVMSGISRMVPTLIMGGVILAFSQLIAYSWLKIPAEIGIMDALNSGKFSGFDLSLLKFAWLSQSFGGVLFGFAIPMFAAFVANSIGGKLAFPAGFIGGLMSTQPTQLLNFDPSTMQWATSSPVPSTFIGALIISIVAGYLVKWMNQKIQLPDFLLAFKTTFLLPILSAIFVMLAMYYVITPFGGWINGGIRTVLTAAGEKGALMYAMGIAAATAIDLGGPINKAAGFVAFSFTTDHVLPVTARSIAIVIPPIGLGLATIIDRRLTGKRLFNAQLYPQGKTAMFLAFMGISEGAIPFALESPITAIPSYMVGAIVGSTAAVWLGAVQWFPESAIWAWPLVTNLGVYMAGIALGAVITALMVVFLRLMMFRKGKLLIDSL.

Residues 1–46 (MAIKKRSATVVPGASGAAAAVKNPQASKTSFWGELPQHVMSGISRM) lie on the Cytoplasmic side of the membrane. The PTS EIIC type-2 domain occupies 35–410 (LPQHVMSGIS…RLMMFRKGKL (376 aa)). The chain crosses the membrane as a helical span at residues 47 to 67 (VPTLIMGGVILAFSQLIAYSW). The Periplasmic portion of the chain corresponds to 68-101 (LKIPAEIGIMDALNSGKFSGFDLSLLKFAWLSQS). A helical membrane pass occupies residues 102–122 (FGGVLFGFAIPMFAAFVANSI). The Cytoplasmic segment spans residues 123-126 (GGKL). A helical transmembrane segment spans residues 127 to 147 (AFPAGFIGGLMSTQPTQLLNF). The Periplasmic segment spans residues 148–157 (DPSTMQWATS). Residues 158 to 178 (SPVPSTFIGALIISIVAGYLV) form a helical membrane-spanning segment. Residues 179–197 (KWMNQKIQLPDFLLAFKTT) lie on the Cytoplasmic side of the membrane. A helical transmembrane segment spans residues 198 to 218 (FLLPILSAIFVMLAMYYVITP). Residues 219–237 (FGGWINGGIRTVLTAAGEK) lie on the Periplasmic side of the membrane. Residues 238-258 (GALMYAMGIAAATAIDLGGPI) form a helical membrane-spanning segment. Topologically, residues 259-276 (NKAAGFVAFSFTTDHVLP) are cytoplasmic. A helical membrane pass occupies residues 277–297 (VTARSIAIVIPPIGLGLATII). Over 298-318 (DRRLTGKRLFNAQLYPQGKTA) the chain is Periplasmic. Residues 319–339 (MFLAFMGISEGAIPFALESPI) traverse the membrane as a helical segment. Over 340–341 (TA) the chain is Cytoplasmic. A helical membrane pass occupies residues 342-362 (IPSYMVGAIVGSTAAVWLGAV). Residues 363 to 378 (QWFPESAIWAWPLVTN) are Periplasmic-facing. Residues 379-399 (LGVYMAGIALGAVITALMVVF) form a helical membrane-spanning segment. At 400 to 415 (LRLMMFRKGKLLIDSL) the chain is on the cytoplasmic side.

It localises to the cell inner membrane. In terms of biological role, the phosphoenolpyruvate-dependent sugar phosphotransferase system (PTS), a major carbohydrate active -transport system, catalyzes the phosphorylation of incoming sugar substrates concomitant with their translocation across the cell membrane. The protein is Fructose-like permease IIC component 1 (fryC) of Escherichia coli (strain K12).